The sequence spans 217 residues: MIQSLLTQFGEPLTRVENAITALQQGQGVLVVDDENRENEGDFVFSAEHLTTAQMAEMIREGSGIVCLCMGEERIKQLDLPQMVTHNTSQNNTAYTITIEAKEGVTTGVSAADRVTTIKAATADNAKPEDLSRPGHVFGLKAKTGGVLVRRGHTEASVDLMQLAGLKPFGVICELTNPDGSMARLPEVSGYANKHNMPVVSIEDLVQYIQIAQQKVS.

D-ribulose 5-phosphate contacts are provided by residues 37–38, D42, 150–154, and E174; these read RE and RRGHT. A Mg(2+)-binding site is contributed by E38. Mg(2+) is bound at residue H153.

The protein belongs to the DHBP synthase family. As to quaternary structure, homodimer. It depends on Mg(2+) as a cofactor. Requires Mn(2+) as cofactor.

The catalysed reaction is D-ribulose 5-phosphate = (2S)-2-hydroxy-3-oxobutyl phosphate + formate + H(+). The protein operates within cofactor biosynthesis; riboflavin biosynthesis; 2-hydroxy-3-oxobutyl phosphate from D-ribulose 5-phosphate: step 1/1. In terms of biological role, catalyzes the conversion of D-ribulose 5-phosphate to formate and 3,4-dihydroxy-2-butanone 4-phosphate. The polypeptide is 3,4-dihydroxy-2-butanone 4-phosphate synthase (Pseudoalteromonas translucida (strain TAC 125)).